The sequence spans 412 residues: uncharacterized protein (412 aa).

Residues Cys-62, Cys-68, Cys-71, and Cys-143 each coordinate [4Fe-4S] cluster. Residues Gln-243, Phe-270, Glu-290, and Asp-338 each contribute to the S-adenosyl-L-methionine site. The active-site Nucleophile is the Cys-364.

Belongs to the class I-like SAM-binding methyltransferase superfamily. RNA M5U methyltransferase family.

This is an uncharacterized protein from Mesorhizobium japonicum (strain LMG 29417 / CECT 9101 / MAFF 303099) (Mesorhizobium loti (strain MAFF 303099)).